The sequence spans 232 residues: Probable caffeoyl-CoA O-methyltransferase At4g26220 (232 aa).

Residue Lys7 participates in substrate binding. Residues Thr49, Glu71, 73 to 74 (GV), Ser79, Asp97, and Ala126 contribute to the S-adenosyl-L-methionine site. Position 149 (Asp149) interacts with substrate. Position 149 (Asp149) interacts with a divalent metal cation. Asp151 contacts S-adenosyl-L-methionine. The a divalent metal cation site is built by Asp175 and Asn176.

The protein belongs to the class I-like SAM-binding methyltransferase superfamily. Cation-dependent O-methyltransferase family. CCoAMT subfamily. A divalent metal cation serves as cofactor.

The enzyme catalyses (E)-caffeoyl-CoA + S-adenosyl-L-methionine = (E)-feruloyl-CoA + S-adenosyl-L-homocysteine + H(+). The protein operates within aromatic compound metabolism; phenylpropanoid biosynthesis. Methylates caffeoyl-CoA to feruloyl-CoA and 5-hydroxyferuloyl-CoA to sinapoyl-CoA. Plays a role in the synthesis of feruloylated polysaccharides. Involved in the reinforcement of the plant cell wall. Also involved in the responding to wounding or pathogen challenge by the increased formation of cell wall-bound ferulic acid polymers. This is Probable caffeoyl-CoA O-methyltransferase At4g26220 from Arabidopsis thaliana (Mouse-ear cress).